Reading from the N-terminus, the 175-residue chain is UPF0398 protein SGO_0588 (175 aa).

This sequence belongs to the UPF0398 family.

This chain is UPF0398 protein SGO_0588, found in Streptococcus gordonii (strain Challis / ATCC 35105 / BCRC 15272 / CH1 / DL1 / V288).